The chain runs to 833 residues: cGMP-specific 3',5'-cyclic phosphodiesterase (833 aa).

The residue at position 60 (Ser-60) is a Phosphoserine. The tract at residues 82–101 (FLSDSGKKEQMPLTSPRFDS) is disordered. GAF domains are found at residues 122 to 272 (DVTA…GIVL) and 304 to 461 (SLEV…GLGI). One can recognise a PDEase domain in the interval 494–818 (ETRELQALAA…QKWQALADQQ (325 aa)). The active-site Proton donor is the His-571. Residues His-575, His-611, Asp-612, and Asp-722 each contribute to the Zn(2+) site. Asp-612 lines the Mg(2+) pocket. Gln-775 serves as a coordination point for 3',5'-cyclic GMP.

This sequence belongs to the cyclic nucleotide phosphodiesterase family. Zn(2+) serves as cofactor. Mg(2+) is required as a cofactor. Phosphorylation is regulated by binding of cGMP to the two allosteric sites. Phosphorylation by PRKG1 leads to its activation.

The catalysed reaction is 3',5'-cyclic GMP + H2O = GMP + H(+). It participates in purine metabolism; 3',5'-cyclic GMP degradation; GMP from 3',5'-cyclic GMP: step 1/1. Its function is as follows. Plays a role in signal transduction by regulating the intracellular concentration of cyclic nucleotides. This phosphodiesterase catalyzes the specific hydrolysis of cGMP to 5'-GMP. Specifically regulates nitric-oxide-generated cGMP. This is cGMP-specific 3',5'-cyclic phosphodiesterase (Pde5a) from Rattus norvegicus (Rat).